Reading from the N-terminus, the 205-residue chain is Large ribosomal subunit protein uL3 (205 aa).

This sequence belongs to the universal ribosomal protein uL3 family. As to quaternary structure, part of the 50S ribosomal subunit. Forms a cluster with proteins L14 and L19.

Its function is as follows. One of the primary rRNA binding proteins, it binds directly near the 3'-end of the 23S rRNA, where it nucleates assembly of the 50S subunit. In Flavobacterium johnsoniae (strain ATCC 17061 / DSM 2064 / JCM 8514 / BCRC 14874 / CCUG 350202 / NBRC 14942 / NCIMB 11054 / UW101) (Cytophaga johnsonae), this protein is Large ribosomal subunit protein uL3.